Reading from the N-terminus, the 457-residue chain is tRNA modification GTPase MnmE (457 aa).

Residues arginine 25, glutamate 87, and arginine 126 each contribute to the (6S)-5-formyl-5,6,7,8-tetrahydrofolate site. Residues 223 to 377 (GISTAIIGRP…IEERINQLFF (155 aa)) form the TrmE-type G domain. Asparagine 233 is a binding site for K(+). GTP-binding positions include 233-238 (NVGKSS), 252-258 (TDIAGTT), and 277-280 (DTAG). Mg(2+) is bound at residue serine 237. K(+) is bound by residues threonine 252, isoleucine 254, and threonine 257. Threonine 258 is a Mg(2+) binding site. Position 457 (lysine 457) interacts with (6S)-5-formyl-5,6,7,8-tetrahydrofolate.

It belongs to the TRAFAC class TrmE-Era-EngA-EngB-Septin-like GTPase superfamily. TrmE GTPase family. Homodimer. Heterotetramer of two MnmE and two MnmG subunits. The cofactor is K(+).

Its subcellular location is the cytoplasm. Functionally, exhibits a very high intrinsic GTPase hydrolysis rate. Involved in the addition of a carboxymethylaminomethyl (cmnm) group at the wobble position (U34) of certain tRNAs, forming tRNA-cmnm(5)s(2)U34. The protein is tRNA modification GTPase MnmE of Streptococcus gordonii (strain Challis / ATCC 35105 / BCRC 15272 / CH1 / DL1 / V288).